A 273-amino-acid polypeptide reads, in one-letter code: Undecaprenyl-diphosphatase (273 aa).

7 consecutive transmembrane segments (helical) span residues 39 to 59, 86 to 106, 117 to 137, 146 to 166, 189 to 209, 220 to 240, and 249 to 269; these read SGLT…VVYF, LPFL…LFET, LLIG…DLFG, VTVS…IPGV, FSFL…MLHL, LPLA…VAFL, and IAPF…VILT.

The protein belongs to the UppP family.

It is found in the cell inner membrane. It catalyses the reaction di-trans,octa-cis-undecaprenyl diphosphate + H2O = di-trans,octa-cis-undecaprenyl phosphate + phosphate + H(+). Functionally, catalyzes the dephosphorylation of undecaprenyl diphosphate (UPP). Confers resistance to bacitracin. The chain is Undecaprenyl-diphosphatase from Pelobacter propionicus (strain DSM 2379 / NBRC 103807 / OttBd1).